We begin with the raw amino-acid sequence, 930 residues long: MKLKETLNLGKTAFPMRAGLPNKEPQWQKQWDEANIYAKRQELNANKPAFFLHDGPPYANGNIHVGHALNKISKDIIIRSKSMSGFRAPYIPGWDTHGLPIEQVLAKKGVKRKEIDLADYLDMCRQYALSQVDKQRQDFKRLGVSGDWENPYITLVPKYEAAQIRVFGAMADKGYIYHGAKPVYWSWSSESALAEAEIEYHDIDSTSLYYANRVKDGKDILDTDTYIVVWTTTPFTITASRGLTVGPDIDYVVVKPANDERKFLVAQALLSELAERFAWDNPQVLATHKGIELDRIVTIHPWDDNVEELVMNGDHVTLDSGTGIVHTAPGFGEDDYNVGVKYGLDVVVTVNERGIMMENAGPDFEGQFYDKVLPTVKEKLGDLLLASEVITHSYPFDWRTKKPIIWRAVPQWFASVSKFRQDILDEIDKVHFYPAWGKTRLYNMIRDRGDWVISRQRAWGVPLPIFYAEDGTAIMTKEVTDHIANLFEEHGSVIWWQREAKDLLPEGFTHPGSPNGEFTKENDIMDVWFDSGSSWNGVLNTREDLGYPADLYLEGSDQYRGWFNSSLITSVAVNGHAPYKSVLSQGFVLDGKGEKMSKSKGNIISPNDVAKQYGAEILRLWVASVDTDSDVRVSMEILGQVSETYRKIRNTLRFLIANTTDFNPYINKIAFEDLRSVDKYMLIKFNQLVSVINRAYSHYDFMTIYKAVVNFVTVDLSAFYLDFAKDVVYIEAADDLARRQMQTVFYEILVNITKLLTPILPHTSEEIWSYLEHEEEAFVQLAEMPEAQEFANQDEILDTWSAFMSLRDQAQKALEEARNAKIIGKSLEAHLTVYASEEVKTLLTALDSNIAQLLIVSQLTVTQEQAPKNALVFEDVAFSVEHARGHVCDRCRRIDETVKERPYHVTICNHCAAIVENHFPEAVRQGFESK.

A 'HIGH' region motif is present at residues 57-67; the sequence is PYANGNIHVGH. Glu-554 contributes to the L-isoleucyl-5'-AMP binding site. The 'KMSKS' region motif lies at 595-599; it reads KMSKS. Lys-598 serves as a coordination point for ATP. Cys-888, Cys-891, Cys-908, and Cys-911 together coordinate Zn(2+).

It belongs to the class-I aminoacyl-tRNA synthetase family. IleS type 1 subfamily. In terms of assembly, monomer. Zn(2+) serves as cofactor.

Its subcellular location is the cytoplasm. It carries out the reaction tRNA(Ile) + L-isoleucine + ATP = L-isoleucyl-tRNA(Ile) + AMP + diphosphate. Its function is as follows. Catalyzes the attachment of isoleucine to tRNA(Ile). As IleRS can inadvertently accommodate and process structurally similar amino acids such as valine, to avoid such errors it has two additional distinct tRNA(Ile)-dependent editing activities. One activity is designated as 'pretransfer' editing and involves the hydrolysis of activated Val-AMP. The other activity is designated 'posttransfer' editing and involves deacylation of mischarged Val-tRNA(Ile). This is Isoleucine--tRNA ligase from Streptococcus mutans serotype c (strain ATCC 700610 / UA159).